The sequence spans 382 residues: MTVLIQGAGIAGLALAREFTKAGIDWLLVERASEIRPIGTGITLASNALTALSSTLDLDRLFRRGMPLAGINVYAHDGSMLMSMPSSLGGSSRGGLALQRHELHAALLEGLDESRIRVGVSIVQILDGLDHERVTLSDGTVHDCSLVVGADGIRSSVRRYVWPEATLRHSGETCWRLVVPHRLEDAELAGEVWGHGKRLGFIQISPREMYVYATLKVRREEPEDEEGFVTPQRLAAHYADFDGIGASIARLIPSATTLVHNDLEELAGASWCRGRVVLIGDAAHAMTPNLGQGAAMALEDAFLLARLWCLAPRAETLILFQQQREARIEFIRKQSWIVGRLGQWESPWSVWLRNTLVRLVPNASRRRLHQRLFTGVGEMAAQ.

This sequence belongs to the 3-hydroxybenzoate 6-hydroxylase family.

It catalyses the reaction 2-heptyl-4(1H)-quinolone + NADH + O2 + H(+) = 2-heptyl-3-hydroxy-4(1H)-quinolone + NAD(+) + H2O. Functionally, involved in the terminal step of the biosynthesis of quinolone which in addition to serve as a potent signal for quorum sensing, chelates iron and promotes the formation of membrane vesicles (MVs). Catalyzes the hydroxylation of 2-heptyl-4-quinolone (C7-HHQ) to yield 2-heptyl-3-hydroxy-4-quinolone (PQS). PqsH is also able to hydroxylate HHQ analogs having alkyl side-chain lengths of 3 (C3-HHQ), 5 (C5-HHQ) and 9 (C9-HHQ) carbons, however catalytic efficiencies are significantly reduced for substrates with alkyl side-chain lengths below 7 carbons. The protein is 2-heptyl-3-hydroxy-4(1H)-quinolone synthase (pqsH) of Pseudomonas aeruginosa (strain UCBPP-PA14).